We begin with the raw amino-acid sequence, 348 residues long: Ferredoxin--NADP reductase (348 aa).

Residues Thr26, Glu45, Gln53, Tyr58, Ala98, Phe133, Asp299, and Ser340 each coordinate FAD.

Belongs to the ferredoxin--NADP reductase type 2 family. In terms of assembly, homodimer. FAD is required as a cofactor.

The catalysed reaction is 2 reduced [2Fe-2S]-[ferredoxin] + NADP(+) + H(+) = 2 oxidized [2Fe-2S]-[ferredoxin] + NADPH. The protein is Ferredoxin--NADP reductase of Prosthecochloris aestuarii (strain DSM 271 / SK 413).